A 74-amino-acid polypeptide reads, in one-letter code: UPF0346 protein BPUM_1890 (74 aa).

This sequence belongs to the UPF0346 family.

The sequence is that of UPF0346 protein BPUM_1890 from Bacillus pumilus (strain SAFR-032).